We begin with the raw amino-acid sequence, 295 residues long: Aquaporin-9 (295 aa).

The Cytoplasmic portion of the chain corresponds to 1–24; it reads MPSEKDRAKKNLVQRLALKSCLAK. Residues 25-43 traverse the membrane as a helical segment; it reads ETLSEFLGTFIMIVLGCGS. The Extracellular portion of the chain corresponds to 44–57; that stretch reads IAQAVLSREKAGGI. Residues 58–77 form a helical membrane-spanning segment; it reads ITINIGFATAVVMALYATFG. At 78-79 the chain is on the cytoplasmic side; it reads VS. The segment at residues 80-92 is an intramembrane region (discontinuously helical); it reads GGHINPAVSFAMC. The short motif at 84 to 86 is the NPA 1 element; that stretch reads NPA. Residues 93–98 are Cytoplasmic-facing; sequence TFGRME. The chain crosses the membrane as a helical span at residues 99–123; that stretch reads WFKFPFYVGAQLLGAFVGAATVFGI. At 124-160 the chain is on the extracellular side; the sequence is YYDGLMAFADGKLLITGENGTAFIFATYPKPFVSVPG. A helical membrane pass occupies residues 161–178; the sequence is AFVDQVVSTMFLLLIVFA. The Cytoplasmic portion of the chain corresponds to 179–190; it reads IFDSRNLGVPRG. The chain crosses the membrane as a helical span at residues 191–207; sequence LEPIVIGLLIIVISCSL. Over 208–210 the chain is Extracellular; that stretch reads GLN. Residues 211 to 225 constitute an intramembrane region (discontinuously helical); the sequence is SGCAMNPARDLSPRL. An NPA 2 motif is present at residues 216-218; that stretch reads NPA. Topologically, residues 226–243 are extracellular; it reads FTALAGWGFEVFTFGNNF. A helical transmembrane segment spans residues 244-264; sequence WWIPVVGPMIGAVLGGLIYVL. The Cytoplasmic segment spans residues 265-295; it reads FIQMHHSNPDPEVKAEPAENNLEKHELSVIM.

Belongs to the MIP/aquaporin (TC 1.A.8) family. As to quaternary structure, homotetramer; each monomer provides an independent glycerol/water pore.

It is found in the cell membrane. Its subcellular location is the basolateral cell membrane. It carries out the reaction glycerol(in) = glycerol(out). The enzyme catalyses H2O(in) = H2O(out). The catalysed reaction is urea(in) = urea(out). It catalyses the reaction (S)-lactate(in) = (S)-lactate(out). It carries out the reaction NH4(+)(in) = NH4(+)(out). The enzyme catalyses uracil(in) = uracil(out). The catalysed reaction is adenine(out) = adenine(in). It catalyses the reaction 3-hydroxybutanoate(in) = 3-hydroxybutanoate(out). It carries out the reaction D-sorbitol(in) = D-sorbitol(out). The enzyme catalyses D-mannitol(in) = D-mannitol(out). The catalysed reaction is H2O2(out) = H2O2(in). It catalyses the reaction arsenite(in) = arsenite(out). It carries out the reaction selenite(in) = selenite(out). Aquaglyceroporins form homotetrameric transmembrane channels, with each monomer independently mediating glycerol and water transport across the plasma membrane along their osmotic gradient. AQP9 is the primary route for glycerol uptake in hepatocytes, supporting hepatic gluconeogenesis. It exhibits broad specificity and may transport various small, non-charged solutes, including carbamides, polyols, purines, and pyrimidines. AQP9 may also facilitate hepatic urea extrusion. Due to its permeability to lactate, AQP9 might participate in the astrocyte-to-neuron lactate shuttle, supplying neurons with energy. Additionally, AQP9 is permeable to arsenite, contributing to arsenic excretion by the liver and providing partial protection against arsenic toxicity. It is also permeable to H2O2 in vivo. Could also be permeable to ammonium. This is Aquaporin-9 from Mus musculus (Mouse).